Here is a 186-residue protein sequence, read N- to C-terminus: Holliday junction branch migration complex subunit RuvA (186 aa).

Positions 1-61 are domain I; that stretch reads MYRYIKGIVT…EDIFQLYGFK (61 aa). A domain II region spans residues 62–134; the sequence is DEETLNLFLK…LKGKLVNDEL (73 aa). Residues 134–137 are flexible linker; the sequence is LDMQ. Positions 138–186 are domain III; sequence LLSDNSKDVAAALEALGYNKKEIAKSLKHVNFDQDLNKALKEALAILLK.

Belongs to the RuvA family. Homotetramer. Forms an RuvA(8)-RuvB(12)-Holliday junction (HJ) complex. HJ DNA is sandwiched between 2 RuvA tetramers; dsDNA enters through RuvA and exits via RuvB. An RuvB hexamer assembles on each DNA strand where it exits the tetramer. Each RuvB hexamer is contacted by two RuvA subunits (via domain III) on 2 adjacent RuvB subunits; this complex drives branch migration. In the full resolvosome a probable DNA-RuvA(4)-RuvB(12)-RuvC(2) complex forms which resolves the HJ.

The protein resides in the cytoplasm. In terms of biological role, the RuvA-RuvB-RuvC complex processes Holliday junction (HJ) DNA during genetic recombination and DNA repair, while the RuvA-RuvB complex plays an important role in the rescue of blocked DNA replication forks via replication fork reversal (RFR). RuvA specifically binds to HJ cruciform DNA, conferring on it an open structure. The RuvB hexamer acts as an ATP-dependent pump, pulling dsDNA into and through the RuvAB complex. HJ branch migration allows RuvC to scan DNA until it finds its consensus sequence, where it cleaves and resolves the cruciform DNA. In Acholeplasma laidlawii (strain PG-8A), this protein is Holliday junction branch migration complex subunit RuvA.